The primary structure comprises 321 residues: Protein FAM110C (321 aa).

Disordered regions lie at residues 1-84 and 111-203; these read MRAL…APAP and RGSG…SQSD. Composition is skewed to basic and acidic residues over residues 15-46 and 131-145; these read LLPR…DRAK and GKDK…DEGK. Positions 169–181 are enriched in low complexity; it reads APAARSAAPSSVP. Serine 241 is modified (phosphoserine).

This sequence belongs to the FAM110 family. In terms of assembly, interacts with AKT1; the interaction is transient and follows AKT1 activation. Interacts with PPP2CA and alpha-tubulin. In terms of tissue distribution, detected in stomach, thyroid, trachea, adrenal gland and testis, and at low levels in prostate, ovary, intestine, colon, spinal cord and lymph node.

The protein localises to the cytoplasm. The protein resides in the cytoskeleton. It localises to the microtubule organizing center. Its subcellular location is the centrosome. It is found in the spindle pole. The protein localises to the nucleus. In terms of biological role, may play a role in microtubule organization. May play a role in cell spreading and cell migration of epithelial cells; the function may involve the AKT1 signaling pathway. The chain is Protein FAM110C (FAM110C) from Homo sapiens (Human).